Reading from the N-terminus, the 74-residue chain is Protein kish-B (74 aa).

The N-terminal stretch at 1–22 (MTNVYSFDGILVFGLLFICTCA) is a signal peptide. Residues 23–52 (YLKKVPRLNSWLLSEKKGVWGVFYKAAVIG) lie on the Extracellular side of the membrane. A helical transmembrane segment spans residues 53-73 (TRLHVVVAASCLCMAFYLIFL). Residue lysine 74 is a topological domain, cytoplasmic.

This sequence belongs to the KISH family.

The protein localises to the golgi apparatus membrane. Its function is as follows. Involved in the early part of the secretory pathway. In Danio rerio (Zebrafish), this protein is Protein kish-B (tmem167b).